A 171-amino-acid chain; its full sequence is Methyl-coenzyme M reductase operon protein D (171 aa).

MCR is composed of three subunits: alpha, beta, and gamma. The function of proteins C and D is not known.

This Methanosarcina barkeri (strain Fusaro / DSM 804) protein is Methyl-coenzyme M reductase operon protein D (mcrD).